Consider the following 297-residue polypeptide: Polyketide transferase ATR5 (297 aa).

The interval 49-272 (DVAVWFQKRG…FVLAENKGHM (224 aa)) is abhydrolase domain.

It belongs to the polyketide transferase af380 family.

The protein operates within mycotoxin biosynthesis. Polyketide transferase; part of the core atranone cluster (CAC) which products are predicted to catalyze most or all steps of atranone synthesis, starting from geranylgeranyl pyrophosphate (GGPP). The initial cyclization of GGPP to dolabellane is probably performed by the terpene cyclase ATR13. The Baeyer-Villiger oxidation near the end of the atranone synthesis, which converts atranones D and E to atranones F and G is predicted to be catalyzed by the monooxygenase ATR8. Of the CAC's other predicted gene products, the reducing PKS ATR6 might synthesize a polyketide chain. This polyketide is probably transferred onto the atranone backbone by the polyketide transferase ATR5. Other predicted CAC products include 4 oxygenases (ATR2, ATR3, ATR4, and ATR14), 3 short-chain reductases (ATR7, ATR9, and ATR10), and a methyltransferase (ATR12). These may all be involved in the various steps of atranone biosynthesis, although their specific roles must await experimental determination. In Stachybotrys chlorohalonatus (strain IBT 40285), this protein is Polyketide transferase ATR5.